We begin with the raw amino-acid sequence, 342 residues long: Inositol-tetrakisphosphate 1-kinase 1 (342 aa).

2 residues coordinate 1D-myo-inositol 6-phosphate: Lys28 and Lys70. 2 residues coordinate ATP: Arg105 and Lys155. Positions 116–332 (DHAADQDSTF…HKDGVGNQQE (217 aa)) constitute an ATP-grasp domain. 1D-myo-inositol 6-phosphate contacts are provided by Gly161 and His166. Residues His166, Gln187, and Val190 each coordinate ATP. The 1D-myo-inositol 6-phosphate site is built by Lys198 and Tyr200. Residue Ser213 coordinates ATP. Residues 219–247 (PEDDASAQGSVSFSQVSNLPTERTAEEYY) form a catalytic specificity elements (CSE) region. Position 280 (Asn280) interacts with 1D-myo-inositol 6-phosphate. Asp282 serves as a coordination point for Mg(2+). The ATP site is built by Ile296, Asp297, and Asn299. The Mg(2+) site is built by Asp297 and Asn299. The 1D-myo-inositol 6-phosphate site is built by Asn299, Gly303, and Lys306.

Belongs to the ITPK1 family. Monomer. Mg(2+) is required as a cofactor. Expressed in the embryo of 15 day after pollination. Expressed in kernels at earlier stages but at very low levels. Expression in the embryo peaks at 15 days after pollination and then declines. No expression is detected from endosperm and vegetative tissues.

It carries out the reaction 1D-myo-inositol 3,4,5,6-tetrakisphosphate + ATP = 1D-myo-inositol 1,3,4,5,6-pentakisphosphate + ADP + H(+). The catalysed reaction is 1D-myo-inositol 1,3,4-trisphosphate + ATP = 1D-myo-inositol 1,3,4,5-tetrakisphosphate + ADP + H(+). It catalyses the reaction 1D-myo-inositol 1,3,4-trisphosphate + ATP = 1D-myo-inositol 1,3,4,6-tetrakisphosphate + ADP + H(+). The enzyme catalyses 1D-myo-inositol 1,2,3,4,5-pentakisphosphate + ATP = 3-diphospho-1D-myo-inositol 1,2,4,5-tetrakisphosphate + ADP. It carries out the reaction 1D-myo-inositol hexakisphosphate + ATP = 5-diphospho-1D-myo-inositol 1,2,3,4,6-pentakisphosphate + ADP. Functionally, kinase that can phosphorylate various inositol polyphosphate such as Ins(3,4,5,6)P4 or Ins(1,3,4)P3 and participates in phytic acid biosynthesis in developing seeds. Phosphorylates Ins(3,4,5,6)P4 at position 1 to form Ins(1,3,4,5,6)P5. This reaction is thought to have regulatory importance, since Ins(3,4,5,6)P4 is an inhibitor of plasma membrane Ca(2+)-activated Cl(-) channels, while Ins(1,3,4,5,6)P5 is not. Also phosphorylates Ins(1,3,4)P3 on O-5 and O-6 to form Ins(1,3,4,6)P4, an essential molecule in the hexakisphosphate (InsP6) pathway. Also able to phosphorylate Ins(3,5,6)P3 but not Ins(1,4,5)P3, Ins(2,4,5)P3, Ins(1,3,4,6)P4 nor Ins(1,3,5,6)P4. Has higher specific activity on Ins(3,4,5,6)P4 than Ins(1,3,4)P3 and Ins(3,5,6)P3. Can also could use Ins(1,2,5,6)P4 as a substrate. Able to add a beta-phosphate to the 3 positions of Ins(1,2,3,4,5)P5 and to add beta-phosphate to InsP6 to yield 5-InsP7, thus exhibiting InsP6 kinase activity. Also has Ins(1,3,4,5,6)P5 phosphatase activity. The polypeptide is Inositol-tetrakisphosphate 1-kinase 1 (Zea mays (Maize)).